Consider the following 148-residue polypeptide: Ribosomal RNA large subunit methyltransferase H (148 aa).

Residues L62, G94, and 113 to 118 (LSLLTL) contribute to the S-adenosyl-L-methionine site.

It belongs to the RNA methyltransferase RlmH family. As to quaternary structure, homodimer.

The protein localises to the cytoplasm. It carries out the reaction pseudouridine(1915) in 23S rRNA + S-adenosyl-L-methionine = N(3)-methylpseudouridine(1915) in 23S rRNA + S-adenosyl-L-homocysteine + H(+). Specifically methylates the pseudouridine at position 1915 (m3Psi1915) in 23S rRNA. The polypeptide is Ribosomal RNA large subunit methyltransferase H (Deinococcus geothermalis (strain DSM 11300 / CIP 105573 / AG-3a)).